Consider the following 445-residue polypeptide: tRNA modification GTPase MnmE (445 aa).

Arg-20, Glu-79, and Lys-119 together coordinate (6S)-5-formyl-5,6,7,8-tetrahydrofolate. The TrmE-type G domain maps to 215 to 371 (GLKLAIIGPP…ILKNIEEIAE (157 aa)). Asn-225 serves as a coordination point for K(+). GTP contacts are provided by residues 225 to 230 (NAGKSS), 244 to 250 (SNIAGTT), and 269 to 272 (DTAG). Ser-229 provides a ligand contact to Mg(2+). K(+)-binding residues include Ser-244, Ile-246, and Thr-249. A Mg(2+)-binding site is contributed by Thr-250. Lys-445 serves as a coordination point for (6S)-5-formyl-5,6,7,8-tetrahydrofolate.

The protein belongs to the TRAFAC class TrmE-Era-EngA-EngB-Septin-like GTPase superfamily. TrmE GTPase family. Homodimer. Heterotetramer of two MnmE and two MnmG subunits. K(+) serves as cofactor.

Its subcellular location is the cytoplasm. Exhibits a very high intrinsic GTPase hydrolysis rate. Involved in the addition of a carboxymethylaminomethyl (cmnm) group at the wobble position (U34) of certain tRNAs, forming tRNA-cmnm(5)s(2)U34. The protein is tRNA modification GTPase MnmE of Rickettsia bellii (strain OSU 85-389).